Reading from the N-terminus, the 129-residue chain is Thioredoxin H7 (129 aa).

One can recognise a Thioredoxin domain in the interval 6–129 (SSVHDVHSSM…LVKKIEQHRV (124 aa)). Active-site nucleophile residues include C55 and C58. C55 and C58 are joined by a disulfide.

Belongs to the thioredoxin family. Plant H-type subfamily.

It is found in the cytoplasm. Functionally, probable thiol-disulfide oxidoreductase that may be involved in the redox regulation of a number of cytosolic enzymes. The chain is Thioredoxin H7 (TRX7) from Arabidopsis thaliana (Mouse-ear cress).